We begin with the raw amino-acid sequence, 1578 residues long: Cilia- and flagella-associated protein 74 (1578 aa).

Residues 1 to 14 are compositionally biased toward acidic residues; the sequence is MEEPTVQFSDEDLV. 2 disordered regions span residues 1–21 and 33–67; these read MEEPTVQFSDEDLVDNFPPMD and EVERPSEGLEDEGSHSSAKKESKGAEKMRKSTTKD. The span at 33 to 65 shows a compositional bias: basic and acidic residues; sequence EVERPSEGLEDEGSHSSAKKESKGAEKMRKSTT. Coiled-coil stretches lie at residues 103-156 and 330-378; these read RQRM…QSKI and KYLF…RRQH.

It belongs to the CFAP74 family.

Its subcellular location is the cytoplasm. The protein resides in the cytoskeleton. It is found in the cilium axoneme. The protein localises to the flagellum axoneme. Its function is as follows. As part of the central apparatus of the cilium axoneme may play a role in cilium movement. May play an important role in sperm architecture and function. The sequence is that of Cilia- and flagella-associated protein 74 from Mus musculus (Mouse).